Reading from the N-terminus, the 611-residue chain is Muscarinic acetylcholine receptor gar-3 (611 aa).

The Extracellular portion of the chain corresponds to 1-67 (MQSSSLGNAD…LLGEEGRMVM (67 aa)). N-linked (GlcNAc...) asparagine glycosylation is found at N28 and N33. Residues 68–88 (IVVIGAMFALVTSLGNLMVMV) form a helical membrane-spanning segment. Topologically, residues 89 to 101 (SFKIDKQLQTISN) are cytoplasmic. Residues 102 to 122 (YFLFSLAVADIAIGVISIPMF) traverse the membrane as a helical segment. Residues 123-140 (TYYTAIQKWDLGYTMCQF) lie on the Extracellular side of the membrane. An intrachain disulfide couples C138 to C218. A helical membrane pass occupies residues 141–161 (WLCIDYLMSNASVLNLLLISF). Residues 162–181 (DRYFSVTRPLSYRPRRTTKK) are Cytoplasmic-facing. The helical transmembrane segment at 182–202 (ALTMIACTYIISLILWPPWII) threads the bilayer. Residues 203-227 (SWPYIEGKFTAEPGTCVVQFLQTNP) are Extracellular-facing. The chain crosses the membrane as a helical span at residues 228-248 (YVTVGTAVAAFYLPVTIMCIL). Residues 249-525 (YTRVYWETQK…RKQESKAAKT (277 aa)) are Cytoplasmic-facing. 4 disordered regions span residues 299–364 (RRSM…SSEA), 377–432 (SHFA…NNNS), 446–477 (SRPS…NSEI), and 500–519 (FSSQ…RKQE). A compositionally biased stretch (low complexity) spans 307–317 (SSTSIIKSSGS). Residues 503 to 519 (QERKSEKEQRKNERKQE) show a composition bias toward basic and acidic residues. Residues 526–546 (LSAILCAFIATWTPYNLIVCW) form a helical membrane-spanning segment. Over 547–557 (EAFFPNTVPNV) the chain is Extracellular. Residues 558 to 578 (LWTFSYFLCYINSTINPLCYA) form a helical membrane-spanning segment. Residues 579 to 611 (LCNARFRHTYMRILRCKFKAERPTMNQGYVRRN) lie on the Cytoplasmic side of the membrane.

Belongs to the G-protein coupled receptor 1 family. Muscarinic acetylcholine receptor subfamily.

The protein resides in the cell membrane. The muscarinic acetylcholine receptor mediates various cellular responses, including inhibition of adenylate cyclase, breakdown of phosphoinositides and modulation of potassium channels through the action of G proteins. Primary transducing effect is Pi turnover. Enhances the release of the neurotransmitter acetlycholine in cholinergic motor neurons, which in turn positively feeds back to depolarize body wall muscles and allows for the maintenance of normal body posture and locomotion. The chain is Muscarinic acetylcholine receptor gar-3 (gar-3) from Caenorhabditis elegans.